Consider the following 150-residue polypeptide: Small ribosomal subunit protein uS9 (150 aa).

It belongs to the universal ribosomal protein uS9 family.

This is Small ribosomal subunit protein uS9 from Mycolicibacterium smegmatis (strain ATCC 700084 / mc(2)155) (Mycobacterium smegmatis).